A 99-amino-acid polypeptide reads, in one-letter code: Large ribosomal subunit protein bL21 (99 aa).

It belongs to the bacterial ribosomal protein bL21 family. As to quaternary structure, part of the 50S ribosomal subunit. Contacts protein L20.

This protein binds to 23S rRNA in the presence of protein L20. In Deinococcus geothermalis (strain DSM 11300 / CIP 105573 / AG-3a), this protein is Large ribosomal subunit protein bL21.